The following is a 469-amino-acid chain: NADH-quinone oxidoreductase subunit 13 (469 aa).

A run of 14 helical transmembrane segments spans residues 1–21, 23–43, 47–67, 69–89, 91–111, 115–135, 144–164, 190–210, 258–278, 284–304, 308–328, 354–374, 390–410, and 430–450; these read MVVL…LGLP, ALGV…FLTH, VAHA…AFGL, GLSA…ALVA, VEGR…GLFA, LLVF…MLYL, ALYT…AAVL, AFWV…LFPL, GLLL…AFAA, LLAY…FSGT, AMGG…LFLL, LAAL…LSGF, WLAA…LTAF, and WGFA…PGYF.

It belongs to the complex I subunit 4 family. As to quaternary structure, NDH-1 is composed of 15 different subunits, Nqo1 to Nqo15. The complex has a L-shaped structure, with the hydrophobic arm (subunits Nqo7, Nqo8 and Nqo10 to Nqo14) embedded in the membrane and the hydrophilic peripheral arm (subunits Nqo1 to Nqo6, Nqo9 and Nqo15) protruding into the bacterial cytoplasm. The hydrophilic domain contains all the redox centers.

The protein resides in the cell inner membrane. The enzyme catalyses a quinone + NADH + 5 H(+)(in) = a quinol + NAD(+) + 4 H(+)(out). NDH-1 shuttles electrons from NADH, via FMN and iron-sulfur (Fe-S) centers, to quinones in the respiratory chain. The immediate electron acceptor for the enzyme in this species is menaquinone. Couples the redox reaction to proton translocation (for every two electrons transferred, four hydrogen ions are translocated across the cytoplasmic membrane), and thus conserves the redox energy in a proton gradient required for the synthesis of ATP. The polypeptide is NADH-quinone oxidoreductase subunit 13 (nqo13) (Thermus thermophilus (strain ATCC 27634 / DSM 579 / HB8)).